Reading from the N-terminus, the 159-residue chain is MMNRVVLVGRLTKDPDLRYTPAGAAVATFTLAVNRTFTNQQGEREADFIQCVVWRKPAENAANFLKKGSMAGVDGRIQTRNYEDSDGKRVFVTEVVAESVQFLEPRNHAEGATSNNYQNEANYSNNNKTSSYRADTSQKSDSFANEGKPIDINPDDLPF.

In terms of domain architecture, SSB spans 2 to 104; the sequence is MNRVVLVGRL…VVAESVQFLE (103 aa). Positions 106–159 are disordered; it reads RNHAEGATSNNYQNEANYSNNNKTSSYRADTSQKSDSFANEGKPIDINPDDLPF. Low complexity predominate over residues 114-127; it reads SNNYQNEANYSNNN. The segment covering 128–143 has biased composition (polar residues); sequence KTSSYRADTSQKSDSF.

In terms of assembly, homotetramer.

The polypeptide is Single-stranded DNA-binding protein 2 (ssb2) (Listeria innocua serovar 6a (strain ATCC BAA-680 / CLIP 11262)).